A 484-amino-acid polypeptide reads, in one-letter code: Acetaldehyde dehydrogenase (acetylating) (484 aa).

It belongs to the aldehyde dehydrogenase family.

It catalyses the reaction acetaldehyde + NAD(+) + CoA = acetyl-CoA + NADH + H(+). The protein operates within organosulfur degradation; alkanesulfonate degradation. In terms of biological role, involved in an anaerobic respiration pathway that converts the sulfonate taurine (2-aminoethanesulfonate) to ammonia, acetate and sulfide. Catalyzes the oxidation of acetaldehyde to acetyl-CoA in the presence of CoASH and NAD(+). Highly prefers NAD(+) over NADP(+). The sequence is that of Acetaldehyde dehydrogenase (acetylating) from Bilophila wadsworthia (strain 3_1_6).